A 510-amino-acid chain; its full sequence is Propionyl-CoA carboxylase beta chain (510 aa).

Positions 1 to 257 (MKDILQELEN…SNRTPAPVRP (257 aa)) constitute a CoA carboxyltransferase N-terminal domain. Positions 1–504 (MKDILQELEN…NKKLANPWKK (504 aa)) are carboxyltransferase. Residues 264-504 (RIEDSLDTLI…NKKLANPWKK (241 aa)) enclose the CoA carboxyltransferase C-terminal domain.

This sequence belongs to the AccD/PCCB family. Probably a dodecamer composed of six biotin-containing alpha subunits and six beta subunits.

It carries out the reaction propanoyl-CoA + hydrogencarbonate + ATP = (S)-methylmalonyl-CoA + ADP + phosphate + H(+). It functions in the pathway metabolic intermediate metabolism; propanoyl-CoA degradation; succinyl-CoA from propanoyl-CoA: step 1/3. The polypeptide is Propionyl-CoA carboxylase beta chain (Cereibacter sphaeroides (strain ATCC 17023 / DSM 158 / JCM 6121 / CCUG 31486 / LMG 2827 / NBRC 12203 / NCIMB 8253 / ATH 2.4.1.) (Rhodobacter sphaeroides)).